A 204-amino-acid polypeptide reads, in one-letter code: Ribonuclease HII (204 aa).

Positions 1-197 (MTLGIDEAGR…KNRILNPKLL (197 aa)) constitute an RNase H type-2 domain. Positions 6, 7, and 103 each coordinate a divalent metal cation.

Belongs to the RNase HII family. Requires Mn(2+) as cofactor. Mg(2+) is required as a cofactor.

Its subcellular location is the cytoplasm. It catalyses the reaction Endonucleolytic cleavage to 5'-phosphomonoester.. Its function is as follows. Endonuclease that specifically degrades the RNA of RNA-DNA hybrids. The polypeptide is Ribonuclease HII (Helicobacter pylori (strain HPAG1)).